A 268-amino-acid polypeptide reads, in one-letter code: Phosphatidylglycerol--prolipoprotein diacylglyceryl transferase (268 aa).

Helical transmembrane passes span 23–43, 58–78, 96–116, and 119–139; these read WYALAYLAGFVLGWRYCLALA, FLTWAVVGVILGGRIGYVLFY, GGMSFHGGLIGVLGAILLFCW, and GLSPLAFGDLIAAAAPIGLFF. Arg-141 is an a 1,2-diacyl-sn-glycero-3-phospho-(1'-sn-glycerol) binding site. The next 3 helical transmembrane spans lie at 181-201, 206-226, and 238-258; these read SFLEGAVLFVLLAILVRMPAV, GMTAGIFFIGYGLSRIIAEFF, and AGATMGQLLSVPMVLFGVWLV.

This sequence belongs to the Lgt family.

The protein resides in the cell inner membrane. The enzyme catalyses L-cysteinyl-[prolipoprotein] + a 1,2-diacyl-sn-glycero-3-phospho-(1'-sn-glycerol) = an S-1,2-diacyl-sn-glyceryl-L-cysteinyl-[prolipoprotein] + sn-glycerol 1-phosphate + H(+). Its pathway is protein modification; lipoprotein biosynthesis (diacylglyceryl transfer). Functionally, catalyzes the transfer of the diacylglyceryl group from phosphatidylglycerol to the sulfhydryl group of the N-terminal cysteine of a prolipoprotein, the first step in the formation of mature lipoproteins. In Azospirillum brasilense, this protein is Phosphatidylglycerol--prolipoprotein diacylglyceryl transferase.